Reading from the N-terminus, the 1359-residue chain is DNA-directed RNA polymerase subunit beta (1359 aa).

This sequence belongs to the RNA polymerase beta chain family. In terms of assembly, the RNAP catalytic core consists of 2 alpha, 1 beta, 1 beta' and 1 omega subunit. When a sigma factor is associated with the core the holoenzyme is formed, which can initiate transcription.

It catalyses the reaction RNA(n) + a ribonucleoside 5'-triphosphate = RNA(n+1) + diphosphate. In terms of biological role, DNA-dependent RNA polymerase catalyzes the transcription of DNA into RNA using the four ribonucleoside triphosphates as substrates. This is DNA-directed RNA polymerase subunit beta from Nitrosococcus oceani (strain ATCC 19707 / BCRC 17464 / JCM 30415 / NCIMB 11848 / C-107).